A 481-amino-acid polypeptide reads, in one-letter code: Serine/threonine-protein kinase US3 (481 aa).

The disordered stretch occupies residues 12–63; that stretch reads GQGRRKEEAVPPETKPSRVFPHGPFYTPAEDACLDSPPPETPKPSHTTPPSE. In terms of domain architecture, Protein kinase spans 191–478; sequence FTIHGALTPG…AAELLCLPLF (288 aa). ATP is bound by residues 197–205 and K220; that span reads LTPGSEGCV. Catalysis depends on D305, which acts as the Proton acceptor.

The protein belongs to the protein kinase superfamily. Ser/Thr protein kinase family. In terms of assembly, interacts with host LAT; this interaction prevents LAT activation of TRAF6. Post-translationally, phosphorylated by UL13; this phosphorylation regulates subsequent phosphorylation of UL31 and UL34 by US3. Autophosphorylated.

The protein localises to the host cytoplasm. The protein resides in the host nucleus. The enzyme catalyses L-seryl-[protein] + ATP = O-phospho-L-seryl-[protein] + ADP + H(+). It catalyses the reaction L-threonyl-[protein] + ATP = O-phospho-L-threonyl-[protein] + ADP + H(+). Multifunctional serine/threonine kinase that plays a role in several processes including egress of virus particles from the nucleus, modulation of the actin cytoskeleton and inhibition of host immune response. Phosphorylates UL31 and UL34, two critical regulators of capsid budding from nucleus to endoplasmic reticulum, thereby facilitating virion egress. Modulates and redistributes host components of the nuclear envelope, including LMNA, emerin/EMD and the nuclear matrix protein MATR3. In turn, facilitates nuclear pore impairment and capsid release through impaired nuclear envelope. Phosphorylates envelope glycoprotein B (gB), probably to direct it to the cell surface. Promotes virus intracellular spread by restructuring host cell cytoskeleton. Blocks host apoptosis to extend cell survival and allow efficient viral replication. Promotes viral gene expression by phosphorylating host HDAC2 to reduce viral genome silencing. Strongly inhibits TCR-activated signal transduction in T-cells by reducing the ubiquitination of LAT and TRAF6, leading to a suboptimal activation of LAT. Subverts host antiviral innate immunity by inhibiting type I interferon production through hyperphosphorylation of beta-catenin/CTNNB1. In addition, phosphorylates the RNA sensor RIGI and the transcription factor IRF3 to prevent the RLR-mediated antiviral signaling pathway. Hyperphosphorylates host RELA and thereby dampens NF-kappa-B signaling. Acts as an immunoevasin partly responsible for inhibition of MR1 expression and antigen presentation in response to bacterial infection. This is Serine/threonine-protein kinase US3 (US3) from Human herpesvirus 1 (strain 17) (HHV-1).